The following is a 37-amino-acid chain: MSDIN-like toxin proprotein 5 (37 aa).

Positions 1–10 (MSDINATRLP) are excised as a propeptide. A cross-link (cyclopeptide (Leu-Pro)) is located at residues 11–20 (LFFPPDFRPP). A propeptide spanning residues 21–37 (CVGDADNFTLTRGENLC) is cleaved from the precursor.

The protein belongs to the MSDIN fungal toxin family. In terms of processing, processed by the macrocyclase-peptidase enzyme POPB to yield a toxic cyclic decapeptide. POPB first removes 10 residues from the N-terminus. Conformational trapping of the remaining peptide forces the enzyme to release this intermediate rather than proceed to macrocyclization. The enzyme rebinds the remaining peptide in a different conformation and catalyzes macrocyclization of the N-terminal 10 residues. In terms of tissue distribution, expressed in basidiocarps.

Functionally, probable toxin that belongs to the MSDIN-like toxin family responsible for a large number of food poisoning cases and deaths. The polypeptide is MSDIN-like toxin proprotein 5 (Amanita exitialis (Guangzhou destroying angel)).